Here is a 359-residue protein sequence, read N- to C-terminus: NADH-quinone oxidoreductase subunit H (359 aa).

Transmembrane regions (helical) follow at residues 19-39, 94-114, 127-147, 166-186, 202-222, 266-286, 301-321, and 337-357; these read IGWF…FIAL, FLFV…FAVL, VGLF…LAAG, IVSY…LAGT, FMHW…IYFI, MFMV…SPLP, VWGA…QMWL, and CWKV…IWVI.

This sequence belongs to the complex I subunit 1 family. As to quaternary structure, NDH-1 is composed of 14 different subunits. Subunits NuoA, H, J, K, L, M, N constitute the membrane sector of the complex.

Its subcellular location is the cell inner membrane. The enzyme catalyses a quinone + NADH + 5 H(+)(in) = a quinol + NAD(+) + 4 H(+)(out). In terms of biological role, NDH-1 shuttles electrons from NADH, via FMN and iron-sulfur (Fe-S) centers, to quinones in the respiratory chain. The immediate electron acceptor for the enzyme in this species is believed to be ubiquinone. Couples the redox reaction to proton translocation (for every two electrons transferred, four hydrogen ions are translocated across the cytoplasmic membrane), and thus conserves the redox energy in a proton gradient. This subunit may bind ubiquinone. The polypeptide is NADH-quinone oxidoreductase subunit H (Chlorobaculum parvum (strain DSM 263 / NCIMB 8327) (Chlorobium vibrioforme subsp. thiosulfatophilum)).